The sequence spans 301 residues: Nitric oxide synthase-interacting protein (301 aa).

A Phosphoserine modification is found at S36. The interval 55–75 (DPVVTPDGYLYEREAILEYIL) is U-box-like. Residues 78 to 101 (KKEIARQMKAYEKQRGTRREEQKE) carry the Nuclear localization signal motif. The residue at position 107 (S107) is a Phosphoserine. The tract at residues 131-155 (AKALSGTSPDNAQPGPSVGPPSKDK) is disordered.

This sequence belongs to the NOSIP family. As to quaternary structure, interacts with NOS1 and NOS3. Interacts with PP2A holoenzyme, containing PPP2CA, PPP2CB, PPP2R1A and PPP2R2A subunits.

It is found in the cytoplasm. The protein localises to the nucleus. The catalysed reaction is S-ubiquitinyl-[E2 ubiquitin-conjugating enzyme]-L-cysteine + [acceptor protein]-L-lysine = [E2 ubiquitin-conjugating enzyme]-L-cysteine + N(6)-ubiquitinyl-[acceptor protein]-L-lysine.. In terms of biological role, E3 ubiquitin-protein ligase that is essential for proper development of the forebrain, the eye, and the face. Catalyzes monoubiquitination of serine/threonine-protein phosphatase 2A (PP2A) catalytic subunit PPP2CA/PPP2CB. Negatively regulates nitric oxide production by inducing NOS1 and NOS3 translocation to actin cytoskeleton and inhibiting their enzymatic activity. The sequence is that of Nitric oxide synthase-interacting protein (NOSIP) from Macaca fascicularis (Crab-eating macaque).